An 816-amino-acid polypeptide reads, in one-letter code: Neuroligin-4, X-linked (816 aa).

An N-terminal signal peptide occupies residues 1–41 (MSRPQGLLWLPLLFTPVCVMLNSNVLLWLTALAIKFTLIDS). Residues 42–676 (QAQYPVVNTN…TKRDYSTELS (635 aa)) are Extracellular-facing. Asn102 is a glycosylation site (N-linked (GlcNAc...) asparagine). 2 disulfides stabilise this stretch: Cys110-Cys146 and Cys306-Cys317. The interaction with NRXN1 stretch occupies residues 359-364 (QGEFLN). A disulfide bridge connects residues Cys476 and Cys510. Asn511 carries an N-linked (GlcNAc...) asparagine glycan. The interval 636–659 (TKRPAITPANNPKHSKDPHKTGPE) is disordered. Residues 649 to 658 (HSKDPHKTGP) are compositionally biased toward basic and acidic residues. A helical membrane pass occupies residues 677 to 697 (VTIAVGASLLFLNILAFAALY). At 698–816 (YKKDKRRHET…LPHGHSTTRV (119 aa)) the chain is on the cytoplasmic side. Residue Ser712 is modified to Phosphoserine.

This sequence belongs to the type-B carboxylesterase/lipase family. In terms of assembly, homodimer. Interacts with NRXN1 in a calcium-dependent manner. Interaction with neurexins is mediated by heparan sulfate glycan modification on neurexin. Interacts through its C-terminus with DLG4/PSD-95 third PDZ domain. In terms of tissue distribution, expressed at highest levels in heart. Expressed at lower levels in liver, skeletal muscle and pancreas and at very low levels in brain.

The protein localises to the cell membrane. It is found in the postsynaptic density membrane. In terms of biological role, cell surface protein involved in cell-cell-interactions via its interactions with neurexin family members. The polypeptide is Neuroligin-4, X-linked (NLGN4X) (Homo sapiens (Human)).